A 145-amino-acid chain; its full sequence is Cystatin-like 1 (145 aa).

Residues 1 to 19 (MGIGCWRNPLLLLIALVLS) form the signal peptide. Positions 37-115 (SKKNMNSTLN…KKLRKSLICE (79 aa)) constitute a Cystatin domain. An N-linked (GlcNAc...) asparagine glycan is attached at Asn42. 2 disulfide bridges follow: Cys91–Cys101 and Cys114–Cys134.

The protein belongs to the cystatin family.

Its subcellular location is the secreted. This chain is Cystatin-like 1 (CSTL1), found in Homo sapiens (Human).